The chain runs to 375 residues: N-acetyldiaminopimelate deacetylase (375 aa).

Asp-69 is an active-site residue. Glu-128 serves as the catalytic Proton acceptor.

The protein belongs to the peptidase M20A family. N-acetyldiaminopimelate deacetylase subfamily.

It catalyses the reaction N-acetyl-(2S,6S)-2,6-diaminopimelate + H2O = (2S,6S)-2,6-diaminopimelate + acetate. Its pathway is amino-acid biosynthesis; L-lysine biosynthesis via DAP pathway; LL-2,6-diaminopimelate from (S)-tetrahydrodipicolinate (acetylase route): step 3/3. Catalyzes the conversion of N-acetyl-diaminopimelate to diaminopimelate and acetate. This chain is N-acetyldiaminopimelate deacetylase, found in Streptococcus suis (strain 05ZYH33).